We begin with the raw amino-acid sequence, 136 residues long: Histone H3 (136 aa).

A disordered region spans residues 1 to 43 (MARTKQTARKSTGGKAPRKQLATKAARKSAPATGGVKKPHRYR). The residue at position 5 (K5) is an N6-methylated lysine. K10 carries the post-translational modification N6-acetyllysine; alternate. The residue at position 10 (K10) is an N6-methylated lysine; alternate. Position 11 is a phosphoserine (S11). An N6-acetyllysine mark is found at K15 and K24. K28, K37, and K80 each carry N6-methylated lysine.

It belongs to the histone H3 family. In terms of assembly, the nucleosome is a histone octamer containing two molecules each of H2A, H2B, H3 and H4 assembled in one H3-H4 heterotetramer and two H2A-H2B heterodimers. The octamer wraps approximately 147 bp of DNA. In terms of processing, acetylation is generally linked to gene activation. Methylation at Lys-5 is linked to gene activation. Methylation at Lys-10 is linked to gene repression.

The protein localises to the nucleus. It localises to the chromosome. In terms of biological role, core component of nucleosome. Nucleosomes wrap and compact DNA into chromatin, limiting DNA accessibility to the cellular machineries which require DNA as a template. Histones thereby play a central role in transcription regulation, DNA repair, DNA replication and chromosomal stability. DNA accessibility is regulated via a complex set of post-translational modifications of histones, also called histone code, and nucleosome remodeling. In Platynereis dumerilii (Dumeril's clam worm), this protein is Histone H3.